The primary structure comprises 144 residues: 3-hydroxyacyl-[acyl-carrier-protein] dehydratase FabZ (144 aa).

Histidine 48 is a catalytic residue.

The protein belongs to the thioester dehydratase family. FabZ subfamily.

The protein localises to the cytoplasm. It catalyses the reaction a (3R)-hydroxyacyl-[ACP] = a (2E)-enoyl-[ACP] + H2O. In terms of biological role, involved in unsaturated fatty acids biosynthesis. Catalyzes the dehydration of short chain beta-hydroxyacyl-ACPs and long chain saturated and unsaturated beta-hydroxyacyl-ACPs. The chain is 3-hydroxyacyl-[acyl-carrier-protein] dehydratase FabZ from Bacillus licheniformis (strain ATCC 14580 / DSM 13 / JCM 2505 / CCUG 7422 / NBRC 12200 / NCIMB 9375 / NCTC 10341 / NRRL NRS-1264 / Gibson 46).